The primary structure comprises 280 residues: Large ribosomal subunit protein uL2 (280 aa).

Disordered regions lie at residues methionine 1–histidine 58 and methionine 226–arginine 280. Composition is skewed to basic residues over residues leucine 37–histidine 58 and isoleucine 268–arginine 280.

Belongs to the universal ribosomal protein uL2 family. As to quaternary structure, part of the 50S ribosomal subunit. Forms a bridge to the 30S subunit in the 70S ribosome.

In terms of biological role, one of the primary rRNA binding proteins. Required for association of the 30S and 50S subunits to form the 70S ribosome, for tRNA binding and peptide bond formation. It has been suggested to have peptidyltransferase activity; this is somewhat controversial. Makes several contacts with the 16S rRNA in the 70S ribosome. The chain is Large ribosomal subunit protein uL2 from Mycobacterium avium (strain 104).